We begin with the raw amino-acid sequence, 37 residues long: Large ribosomal subunit protein bL36c (37 aa).

It belongs to the bacterial ribosomal protein bL36 family.

The protein resides in the plastid. It is found in the chloroplast. In Lotus japonicus (Lotus corniculatus var. japonicus), this protein is Large ribosomal subunit protein bL36c.